The primary structure comprises 78 residues: Small ribosomal subunit protein bS18A (78 aa).

The protein belongs to the bacterial ribosomal protein bS18 family. Part of the 30S ribosomal subunit. Forms a tight heterodimer with protein bS6.

In terms of biological role, binds as a heterodimer with protein bS6 to the central domain of the 16S rRNA, where it helps stabilize the platform of the 30S subunit. The protein is Small ribosomal subunit protein bS18A of Streptomyces avermitilis (strain ATCC 31267 / DSM 46492 / JCM 5070 / NBRC 14893 / NCIMB 12804 / NRRL 8165 / MA-4680).